The primary structure comprises 811 residues: Glycerol-3-phosphate acyltransferase (811 aa).

Positions Cys309–Met314 match the HXXXXD motif motif.

It belongs to the GPAT/DAPAT family.

It localises to the cell inner membrane. It carries out the reaction sn-glycerol 3-phosphate + an acyl-CoA = a 1-acyl-sn-glycero-3-phosphate + CoA. It participates in phospholipid metabolism; CDP-diacylglycerol biosynthesis; CDP-diacylglycerol from sn-glycerol 3-phosphate: step 1/3. The sequence is that of Glycerol-3-phosphate acyltransferase from Colwellia psychrerythraea (strain 34H / ATCC BAA-681) (Vibrio psychroerythus).